The chain runs to 270 residues: Sec-independent protein translocase protein TatC (270 aa).

6 helical membrane passes run 25-45, 75-95, 111-131, 156-176, 195-211, and 213-233; these read FIAV…LFDI, VSLL…FWMF, VVIL…FIVF, LGFA…PLVL, KYAI…ITPP, and VVTQ…SIIG. The interval 243–270 is disordered; the sequence is SDEEEAAENSDVQTDKSTDDTTPGEDQN.

It belongs to the TatC family. In terms of assembly, the Tat system comprises two distinct complexes: a TatABC complex, containing multiple copies of TatA, TatB and TatC subunits, and a separate TatA complex, containing only TatA subunits. Substrates initially bind to the TatABC complex, which probably triggers association of the separate TatA complex to form the active translocon.

It is found in the cell inner membrane. Its function is as follows. Part of the twin-arginine translocation (Tat) system that transports large folded proteins containing a characteristic twin-arginine motif in their signal peptide across membranes. Together with TatB, TatC is part of a receptor directly interacting with Tat signal peptides. In Desulforapulum autotrophicum (strain ATCC 43914 / DSM 3382 / VKM B-1955 / HRM2) (Desulfobacterium autotrophicum), this protein is Sec-independent protein translocase protein TatC.